The chain runs to 230 residues: 6-carboxyhexanoate--CoA ligase (230 aa).

Belongs to the BioW family. As to quaternary structure, homodimer. The cofactor is Mg(2+).

It carries out the reaction heptanedioate + ATP + CoA = 6-carboxyhexanoyl-CoA + AMP + diphosphate. Its pathway is metabolic intermediate metabolism; pimeloyl-CoA biosynthesis; pimeloyl-CoA from pimelate: step 1/1. Its function is as follows. Catalyzes the transformation of pimelate into pimeloyl-CoA with concomitant hydrolysis of ATP to AMP. The polypeptide is 6-carboxyhexanoate--CoA ligase (Staphylococcus aureus (strain MRSA252)).